Consider the following 584-residue polypeptide: Pentalenolactone D synthase (584 aa).

FAD contacts are provided by residues 55-56 (IG), 77-78 (DG), 85-86 (TW), 97-98 (DV), Tyr103, Val147, and Met486.

It belongs to the FAD-binding monooxygenase family. It depends on FAD as a cofactor.

The enzyme catalyses 1-deoxy-11-oxopentalenate + NADPH + O2 + H(+) = pentalenolactone D + NADP(+) + H2O. It functions in the pathway antibiotic biosynthesis; pentalenolactone biosynthesis. In terms of biological role, catalyzes the flavin-dependent Baeyer-Villiger oxidation of 1-deoxy-11-oxopentalenic acid to pentalenolactone D in the biosynthesis of pentalenolactone antibiotic. The polypeptide is Pentalenolactone D synthase (penE) (Streptomyces exfoliatus (Streptomyces hydrogenans)).